Here is a 592-residue protein sequence, read N- to C-terminus: Putative D-/L-hydantoinase subunit B (592 aa).

It belongs to the HyuB family. As to quaternary structure, may form a complex with HyuA.

Involved in the asymmetric conversion of racemic 5-substituted hydantoins to the corresponding L-amino acids. HyuA and HyuB are both required for the conversion of D- and L-5-substituted hydantoins to corresponding N-carbamoyl-D- and N-carbamoyl-L-amino acids, respectively. The sequence is that of Putative D-/L-hydantoinase subunit B from Pseudomonas sp. (strain NS671).